Consider the following 404-residue polypeptide: Dihydroorotase (404 aa).

Zn(2+) contacts are provided by His-57 and His-59. Substrate is bound by residues 59–61 and Asn-91; that span reads HLR. Residues Lys-135, His-164, His-204, and Asp-272 each coordinate Zn(2+). The residue at position 135 (Lys-135) is an N6-carboxylysine. Asp-272 is an active-site residue. Residues His-276 and 286–287 each bind substrate; that span reads AG.

The protein belongs to the metallo-dependent hydrolases superfamily. DHOase family. Class I DHOase subfamily. The cofactor is Zn(2+).

The catalysed reaction is (S)-dihydroorotate + H2O = N-carbamoyl-L-aspartate + H(+). Its pathway is pyrimidine metabolism; UMP biosynthesis via de novo pathway; (S)-dihydroorotate from bicarbonate: step 3/3. Catalyzes the reversible cyclization of carbamoyl aspartate to dihydroorotate. This is Dihydroorotase from Pyrococcus abyssi (strain GE5 / Orsay).